A 220-amino-acid chain; its full sequence is Pyridoxine/pyridoxamine 5'-phosphate oxidase (220 aa).

FMN-binding positions include Arg-49–Lys-54, Tyr-68–Thr-69, Lys-75, and Gln-97. Lys-54 is a binding site for substrate. Substrate-binding residues include Tyr-115, Arg-119, and Ser-123. FMN is bound by residues Gln-132–Ser-133 and Trp-176. Arg-182–His-184 contributes to the substrate binding site. Arg-186 contacts FMN.

It belongs to the pyridoxamine 5'-phosphate oxidase family. As to quaternary structure, homodimer. Requires FMN as cofactor.

It catalyses the reaction pyridoxamine 5'-phosphate + O2 + H2O = pyridoxal 5'-phosphate + H2O2 + NH4(+). It carries out the reaction pyridoxine 5'-phosphate + O2 = pyridoxal 5'-phosphate + H2O2. Its pathway is cofactor metabolism; pyridoxal 5'-phosphate salvage; pyridoxal 5'-phosphate from pyridoxamine 5'-phosphate: step 1/1. It participates in cofactor metabolism; pyridoxal 5'-phosphate salvage; pyridoxal 5'-phosphate from pyridoxine 5'-phosphate: step 1/1. Functionally, catalyzes the oxidation of either pyridoxine 5'-phosphate (PNP) or pyridoxamine 5'-phosphate (PMP) into pyridoxal 5'-phosphate (PLP). This is Pyridoxine/pyridoxamine 5'-phosphate oxidase from Paracoccus denitrificans (strain Pd 1222).